The sequence spans 521 residues: Runt-related transcription factor 2 (521 aa).

Disordered stretches follow at residues 18-59 (FWDP…QQQQ) and 222-340 (DGPR…RRIS). Composition is skewed to low complexity over residues 21-33 (PSTS…PSSS) and 47-59 (AAQQ…QQQQ). Residues 101–229 (TMVEIIADHP…TVDGPREPRR (129 aa)) enclose the Runt domain. A Glycyl lysine isopeptide (Lys-Gly) (interchain with G-Cter in SUMO2) cross-link involves residue Lys238. The interval 242-258 (FSDRLSDLGRIPHPSMR) is required for interaction with FOXO1. Arg267 is modified (asymmetric dimethylarginine). The span at 267–326 (RPSLNSAPSPFNPQGQSQITDPRQAQSSPPWSYDQSYPSYLSQMTSPSIHSTTPLSSTRG) shows a compositional bias: polar residues. The interval 336 to 439 (PRRISDDDTA…SQSQSGPFQT (104 aa)) is interaction with KAT6A. Ser340 is modified (phosphoserine). Residues 374–468 (RQFPSISSLT…VPGGDRSPSR (95 aa)) are interaction with KAT6B. The residue at position 451 (Ser451) is a Phosphoserine; by CDK1. The segment at 460 to 521 (PGGDRSPSRM…RMDESVWRPY (62 aa)) is disordered. Polar residues-rich tracts occupy residues 473 to 492 (CTTT…NQND) and 499 to 511 (SHSS…NSSG). The span at 512-521 (RMDESVWRPY) shows a compositional bias: basic and acidic residues.

Heterodimer of an alpha and a beta subunit. The alpha subunit binds DNA as a monomer and through the Runt domain. DNA-binding is increased by heterodimerization. Interacts with XRCC6 (Ku70) and XRCC5 (Ku80). Interacts with HIVEP3. Interacts with IFI204. Interaction with SATB2; the interaction results in enhanced DNA binding and transactivation by these transcription factors. Binds to HIPK3. Interacts with FOXO1 (via a C-terminal region); the interaction inhibits RUNX2 transcriptional activity towards BGLAP. This interaction is prevented on insulin or IGF1 stimulation as FOXO1 is exported from the nucleus. Interacts with CCNB1, KAT6A and KAT6B. Interacts with FOXP3. Interacts with TMEM119. Interacts with OLFM2. Interacts with IPO7; the interaction inhibits RUNX2 nuclear translocation in osteoblasts. In terms of assembly, interacts with DDX5. In terms of processing, phosphorylated; probably by MAP kinases (MAPK). Phosphorylation by HIPK3 is required for the SPEN/MINT and FGF2 transactivation during osteoblastic differentiation. Phosphorylation at Ser-451 by CDK1 promotes endothelial cell proliferation required for tumor angiogenesis probably by facilitating cell cycle progression. Isoform 3 is phosphorylated on Ser-340. In terms of tissue distribution, specifically expressed in osteoblasts.

It localises to the nucleus. The protein localises to the cytoplasm. Functionally, transcription factor involved in osteoblastic differentiation and skeletal morphogenesis. Essential for the maturation of osteoblasts and both intramembranous and endochondral ossification. CBF binds to the core site, 5'-PYGPYGGT-3', of a number of enhancers and promoters, including murine leukemia virus, polyomavirus enhancer, T-cell receptor enhancers, osteocalcin, osteopontin, bone sialoprotein, alpha 1(I) collagen, LCK, IL-3 and GM-CSF promoters. In osteoblasts, supports transcription activation: synergizes with SPEN/MINT to enhance FGFR2-mediated activation of the osteocalcin FGF-responsive element (OCFRE). Inhibits KAT6B-dependent transcriptional activation. This chain is Runt-related transcription factor 2 (RUNX2), found in Homo sapiens (Human).